A 92-amino-acid chain; its full sequence is Small ribosomal subunit protein uS19c (92 aa).

Belongs to the universal ribosomal protein uS19 family.

It is found in the plastid. The protein localises to the chloroplast. Protein S19 forms a complex with S13 that binds strongly to the 16S ribosomal RNA. This Calycanthus floridus var. glaucus (Eastern sweetshrub) protein is Small ribosomal subunit protein uS19c.